Consider the following 376-residue polypeptide: Chaperone protein DnaJ (376 aa).

In terms of domain architecture, J spans 5–70 (DYYEVLGVAK…QKRAAYDQYG (66 aa)). The CR-type zinc finger occupies 136-214 (GYDTQIRVPS…CHGSGKVKET (79 aa)). Residues cysteine 149, cysteine 152, cysteine 166, cysteine 169, cysteine 188, cysteine 191, cysteine 202, and cysteine 205 each contribute to the Zn(2+) site. CXXCXGXG motif repeat units lie at residues 149 to 156 (CEVCHGSG), 166 to 173 (CPTCHGQG), 188 to 195 (CPKCHGTG), and 202 to 209 (CAHCHGSG).

It belongs to the DnaJ family. In terms of assembly, homodimer. It depends on Zn(2+) as a cofactor.

Its subcellular location is the cytoplasm. In terms of biological role, participates actively in the response to hyperosmotic and heat shock by preventing the aggregation of stress-denatured proteins and by disaggregating proteins, also in an autonomous, DnaK-independent fashion. Unfolded proteins bind initially to DnaJ; upon interaction with the DnaJ-bound protein, DnaK hydrolyzes its bound ATP, resulting in the formation of a stable complex. GrpE releases ADP from DnaK; ATP binding to DnaK triggers the release of the substrate protein, thus completing the reaction cycle. Several rounds of ATP-dependent interactions between DnaJ, DnaK and GrpE are required for fully efficient folding. Also involved, together with DnaK and GrpE, in the DNA replication of plasmids through activation of initiation proteins. In Burkholderia multivorans (strain ATCC 17616 / 249), this protein is Chaperone protein DnaJ.